The chain runs to 282 residues: Pantothenate synthetase (282 aa).

An ATP-binding site is contributed by 30-37; that stretch reads MGYLHEGH. Catalysis depends on His-37, which acts as the Proton donor. Gln-61 provides a ligand contact to (R)-pantoate. Gln-61 contacts beta-alanine. 148-151 lines the ATP pocket; the sequence is GQKD. Gln-154 is a binding site for (R)-pantoate. ATP is bound by residues Val-177 and 185-188; that span reads MSSR.

This sequence belongs to the pantothenate synthetase family. Homodimer.

Its subcellular location is the cytoplasm. The enzyme catalyses (R)-pantoate + beta-alanine + ATP = (R)-pantothenate + AMP + diphosphate + H(+). The protein operates within cofactor biosynthesis; (R)-pantothenate biosynthesis; (R)-pantothenate from (R)-pantoate and beta-alanine: step 1/1. Catalyzes the condensation of pantoate with beta-alanine in an ATP-dependent reaction via a pantoyl-adenylate intermediate. This Syntrophomonas wolfei subsp. wolfei (strain DSM 2245B / Goettingen) protein is Pantothenate synthetase.